A 142-amino-acid polypeptide reads, in one-letter code: Hemoglobin subunit alpha (142 aa).

The region spanning 2–142 is the Globin domain; that stretch reads VLSAADKGNV…VSTVLTSKYR (141 aa). Position 4 is a phosphoserine (S4). An N6-succinyllysine mark is found at K8 and K12. K17 bears the N6-acetyllysine; alternate mark. The residue at position 17 (K17) is an N6-succinyllysine; alternate. Position 25 is a phosphotyrosine (Y25). Phosphoserine is present on S36. The residue at position 41 (K41) is an N6-succinyllysine. S50 is subject to Phosphoserine. Residue H59 coordinates O2. H88 contacts heme b. S103 carries the post-translational modification Phosphoserine. Residue T109 is modified to Phosphothreonine. S125 bears the Phosphoserine mark. Phosphothreonine is present on residues T135 and T138. S139 bears the Phosphoserine mark.

The protein belongs to the globin family. As to quaternary structure, heterotetramer of two alpha chains and two beta chains. In terms of tissue distribution, red blood cells.

Involved in oxygen transport from the lung to the various peripheral tissues. Functionally, hemopressin acts as an antagonist peptide of the cannabinoid receptor CNR1. Hemopressin-binding efficiently blocks cannabinoid receptor CNR1 and subsequent signaling. This chain is Hemoglobin subunit alpha (HBA), found in Bos gaurus frontalis (Domestic gayal).